The sequence spans 301 residues: Probable alpha-L-glutamate ligase (301 aa).

An ATP-grasp domain is found at 104–287 (LQLLSRRGIG…VAGIIIEHLE (184 aa)). ATP is bound by residues lysine 141, 178–179 (EY), aspartate 187, and 211–213 (RSN). Aspartate 248, glutamate 260, and asparagine 262 together coordinate Mg(2+). Aspartate 248, glutamate 260, and asparagine 262 together coordinate Mn(2+).

This sequence belongs to the RimK family. Mg(2+) serves as cofactor. Mn(2+) is required as a cofactor.

This chain is Probable alpha-L-glutamate ligase, found in Pseudomonas fluorescens (strain Pf0-1).